The primary structure comprises 193 residues: Thymidine kinase (193 aa).

ATP is bound by residues S9 to S16 and D87 to N90. E88 acts as the Proton acceptor in catalysis. The Zn(2+) site is built by C145, C147, C182, and H185.

It belongs to the thymidine kinase family. As to quaternary structure, homotetramer.

It is found in the cytoplasm. The catalysed reaction is thymidine + ATP = dTMP + ADP + H(+). This is Thymidine kinase from Agrobacterium fabrum (strain C58 / ATCC 33970) (Agrobacterium tumefaciens (strain C58)).